A 164-amino-acid polypeptide reads, in one-letter code: Lipoprotein signal peptidase (164 aa).

Transmembrane regions (helical) follow at residues 12–32 (WLWL…LILQ), 70–90 (WFFA…MYRS), and 102–122 (ALII…GFVV). Residues Asp-123 and Asp-141 contribute to the active site. A helical transmembrane segment spans residues 137–157 (FNLADTAICVGAALIVLEGFL).

Belongs to the peptidase A8 family.

Its subcellular location is the cell inner membrane. It carries out the reaction Release of signal peptides from bacterial membrane prolipoproteins. Hydrolyzes -Xaa-Yaa-Zaa-|-(S,diacylglyceryl)Cys-, in which Xaa is hydrophobic (preferably Leu), and Yaa (Ala or Ser) and Zaa (Gly or Ala) have small, neutral side chains.. It participates in protein modification; lipoprotein biosynthesis (signal peptide cleavage). Functionally, this protein specifically catalyzes the removal of signal peptides from prolipoproteins. This chain is Lipoprotein signal peptidase, found in Escherichia coli O157:H7.